The chain runs to 462 residues: Histidine--tRNA ligase (462 aa).

It belongs to the class-II aminoacyl-tRNA synthetase family. In terms of assembly, homodimer.

Its subcellular location is the cytoplasm. The enzyme catalyses tRNA(His) + L-histidine + ATP = L-histidyl-tRNA(His) + AMP + diphosphate + H(+). The protein is Histidine--tRNA ligase of Trichormus variabilis (strain ATCC 29413 / PCC 7937) (Anabaena variabilis).